A 118-amino-acid polypeptide reads, in one-letter code: Large ribosomal subunit protein uL18 (118 aa).

The disordered stretch occupies residues 1-24; sequence MITKPDKNKIRQKRHRRVRGKLSG. Positions 10-20 are enriched in basic residues; that stretch reads IRQKRHRRVRG.

Belongs to the universal ribosomal protein uL18 family. As to quaternary structure, part of the 50S ribosomal subunit; part of the 5S rRNA/L5/L18/L25 subcomplex. Contacts the 5S and 23S rRNAs.

Functionally, this is one of the proteins that bind and probably mediate the attachment of the 5S RNA into the large ribosomal subunit, where it forms part of the central protuberance. The polypeptide is Large ribosomal subunit protein uL18 (Streptococcus sanguinis (strain SK36)).